The sequence spans 337 residues: ERI1 exoribonuclease 3 (337 aa).

The 175-residue stretch at 146–320 (FLVLDFEATC…DDCKNIANIM (175 aa)) folds into the Exonuclease domain. D150, E152, and D249 together coordinate Mg(2+). The Proton acceptor role is filled by E152. E152 lines the AMP pocket. Residue H307 is the Proton acceptor of the active site. H307 contributes to the AMP binding site. D312 lines the Mg(2+) pocket.

As to quaternary structure, interacts with PRNP. Requires Mg(2+) as cofactor.

This Homo sapiens (Human) protein is ERI1 exoribonuclease 3 (ERI3).